A 77-amino-acid chain; its full sequence is Small ribosomal subunit protein bS16 (77 aa).

The protein belongs to the bacterial ribosomal protein bS16 family.

The polypeptide is Small ribosomal subunit protein bS16 (Helicobacter hepaticus (strain ATCC 51449 / 3B1)).